Consider the following 572-residue polypeptide: Sulfate adenylyltransferase (572 aa).

The tract at residues 1 to 169 is N-terminal; sequence MANTPHGGVL…IQAINKLNHY (169 aa). Positions 170 to 394 are catalytic; sequence DYVGLRYTPA…LRESHPPRAK (225 aa). Position 197 (glutamine 197) interacts with sulfate. ATP is bound by residues 197 to 200 and 291 to 294; these read QTRN and GRDH. Residues threonine 198, arginine 199, and asparagine 200 contribute to the active site. Residue arginine 199 coordinates sulfate. Residue alanine 295 participates in sulfate binding. Position 333 (methionine 333) interacts with ATP. Residues 395-572 are allosteric regulation domain; adenylyl-sulfate kinase-like; the sequence is QGFTIFLTGH…LLESQGFFGN (178 aa). 3'-phosphoadenylyl sulfate is bound by residues 434–437, arginine 451, 477–478, and lysine 515; these read ETVR and IA.

It in the N-terminal section; belongs to the sulfate adenylyltransferase family. The protein in the C-terminal section; belongs to the APS kinase family. Homohexamer. Dimer of trimers.

The protein localises to the cytoplasm. It catalyses the reaction sulfate + ATP + H(+) = adenosine 5'-phosphosulfate + diphosphate. Its pathway is sulfur metabolism; hydrogen sulfide biosynthesis; sulfite from sulfate: step 1/3. With respect to regulation, allosterically inhibited by 3'-phosphoadenosine 5'-phosphosulfate (PAPS). In terms of biological role, catalyzes the first intracellular reaction of sulfate assimilation, forming adenosine-5'-phosphosulfate (APS) from inorganic sulfate and ATP. Plays an important role in sulfate activation as a component of the biosynthesis pathway of sulfur-containing amino acids. This Yarrowia lipolytica (strain CLIB 122 / E 150) (Yeast) protein is Sulfate adenylyltransferase.